A 295-amino-acid polypeptide reads, in one-letter code: ATP synthase gamma chain (295 aa).

The protein belongs to the ATPase gamma chain family. As to quaternary structure, F-type ATPases have 2 components, CF(1) - the catalytic core - and CF(0) - the membrane proton channel. CF(1) has five subunits: alpha(3), beta(3), gamma(1), delta(1), epsilon(1). CF(0) has three main subunits: a, b and c.

Its subcellular location is the cell inner membrane. Produces ATP from ADP in the presence of a proton gradient across the membrane. The gamma chain is believed to be important in regulating ATPase activity and the flow of protons through the CF(0) complex. In Sulfurovum sp. (strain NBC37-1), this protein is ATP synthase gamma chain.